Consider the following 37-residue polypeptide: U1-theraphotoxin-Hs1b (37 aa).

Cystine bridges form between Cys4/Cys18, Cys8/Cys29, and Cys23/Cys34.

As to quaternary structure, form 1 and form 2 may dimerize. In terms of tissue distribution, expressed by the venom gland.

Its subcellular location is the secreted. Its function is as follows. Lethal neurotoxin that blocks neuromuscular transmission. Acts cooperatively to potentiate the activity of huwentoxin-I. The chain is U1-theraphotoxin-Hs1b from Cyriopagopus schmidti (Chinese bird spider).